Reading from the N-terminus, the 57-residue chain is Large ribosomal subunit protein bL32 (57 aa).

It belongs to the bacterial ribosomal protein bL32 family.

This chain is Large ribosomal subunit protein bL32, found in Staphylococcus haemolyticus (strain JCSC1435).